The sequence spans 355 residues: BAG family molecular chaperone regulator 1 (355 aa).

The tract at residues 1-112 (MAGRSAARRP…KNVTGTQVEE (112 aa)) is disordered. The span at 26 to 39 (PAREPRQSESRAER) shows a compositional bias: basic and acidic residues. 2 stretches are compositionally biased toward polar residues: residues 80–91 (SSQSEKVGSSSR) and 102–111 (SKNVTGTQVE). 7 repeat units span residues 103–108 (KNVTGT), 111–116 (EEVTKI), 117–122 (EEATQT), 123–128 (EEVTVA), 129–134 (EEVTQT), 141–146 (EEMVQT), and 147–152 (EEMETP). The 7 X 6 AA tandem repeat of E-E-X(4) stretch occupies residues 111 to 209 (EEVTKIEEAT…LIFKGKSLKE (99 aa)). A disordered region spans residues 132 to 151 (TQTDNMAKTEEMVQTEEMET). Residues 154 to 234 (LSVIVTHSNE…VMLIGEKSNP (81 aa)) enclose the Ubiquitin-like domain. Positions 182-229 (DLAQLVEEATGVPLPFQKLIFKGKSLKEMETPLSALGMQNGCRVMLIG) are interaction with HSPA8. Residues 226 to 355 (MLIGEKSNPE…LQSTNLALAE (130 aa)) form an interaction with PPP1R15A region. The BAG domain occupies 256 to 336 (HLQELNKELS…VFLAECDTVE (81 aa)).

As to quaternary structure, homodimer. Forms a heteromeric complex with HSP70/HSC70. Binds to the ATPase domain of HSP/HSC70 chaperones. Interacts with NR3C1. Interacts with the N-terminal region of MAPRE2. Interacts with PPP1R15A. Interacts with BCL2 in an ATP-dependent manner. Interacts with SIAH1, HSPA8 (via NBD), HSPA1A (via NBD) and HSPA1B (via NBD). Interacts with SIAH2. Interacts with ESR1; the interaction is promoted in the absence of estradiol (17-beta-estradiol/E2). In terms of processing, ubiquitinated; mediated by SIAH1 or SIAH2 and leading to its subsequent proteasomal degradation. In terms of tissue distribution, isoform 2 is expressed in the heart, lung, kidney and spinal cord. Isoform 1 and isoform 2 are expressed in hematopoietic cell lines. The levels of isoform 2 are relatively constant in all the cell lines examined while the levels of isoform 1 are more variable (at protein level). Isoform 1 is expressed in the lung and kidney. Isoform 2 is expressed in various tissues, with highest levels in testis and stomach.

It is found in the nucleus. The protein resides in the cytoplasm. Co-chaperone for HSP70 and HSC70 chaperone proteins. Acts as a nucleotide-exchange factor (NEF) promoting the release of ADP from the HSP70 and HSC70 proteins thereby triggering client/substrate protein release. Nucleotide release is mediated via its binding to the nucleotide-binding domain (NBD) of HSPA8/HSC70 where as the substrate release is mediated via its binding to the substrate-binding domain (SBD) of HSPA8/HSC70. Inhibits the pro-apoptotic function of PPP1R15A, and has anti-apoptotic activity. Markedly increases the anti-cell death function of BCL2 induced by various stimuli. Involved in the STUB1-mediated proteasomal degradation of ESR1 in response to age-related circulating estradiol (17-beta-estradiol/E2) decline, thereby promotes neuronal apoptosis in response to ischemic reperfusion injury. The protein is BAG family molecular chaperone regulator 1 (Bag1) of Mus musculus (Mouse).